A 38-amino-acid polypeptide reads, in one-letter code: Large ribosomal subunit protein bL36 (38 aa).

Belongs to the bacterial ribosomal protein bL36 family.

This chain is Large ribosomal subunit protein bL36, found in Anaeromyxobacter dehalogenans (strain 2CP-1 / ATCC BAA-258).